A 376-amino-acid chain; its full sequence is Putative glutamate--cysteine ligase 2 (376 aa).

It belongs to the glutamate--cysteine ligase type 2 family. YbdK subfamily.

The enzyme catalyses L-cysteine + L-glutamate + ATP = gamma-L-glutamyl-L-cysteine + ADP + phosphate + H(+). ATP-dependent carboxylate-amine ligase which exhibits weak glutamate--cysteine ligase activity. This chain is Putative glutamate--cysteine ligase 2, found in Paracoccus denitrificans (strain Pd 1222).